A 206-amino-acid polypeptide reads, in one-letter code: Imidazoleglycerol-phosphate dehydratase (206 aa).

Belongs to the imidazoleglycerol-phosphate dehydratase family.

It is found in the cytoplasm. It catalyses the reaction D-erythro-1-(imidazol-4-yl)glycerol 3-phosphate = 3-(imidazol-4-yl)-2-oxopropyl phosphate + H2O. The protein operates within amino-acid biosynthesis; L-histidine biosynthesis; L-histidine from 5-phospho-alpha-D-ribose 1-diphosphate: step 6/9. The sequence is that of Imidazoleglycerol-phosphate dehydratase from Synechococcus sp. (strain JA-3-3Ab) (Cyanobacteria bacterium Yellowstone A-Prime).